The sequence spans 356 residues: Histidinol-phosphate aminotransferase (356 aa).

Lys-213 bears the N6-(pyridoxal phosphate)lysine mark.

This sequence belongs to the class-II pyridoxal-phosphate-dependent aminotransferase family. Histidinol-phosphate aminotransferase subfamily. Homodimer. Pyridoxal 5'-phosphate serves as cofactor.

The enzyme catalyses L-histidinol phosphate + 2-oxoglutarate = 3-(imidazol-4-yl)-2-oxopropyl phosphate + L-glutamate. The protein operates within amino-acid biosynthesis; L-histidine biosynthesis; L-histidine from 5-phospho-alpha-D-ribose 1-diphosphate: step 7/9. The polypeptide is Histidinol-phosphate aminotransferase (Clostridium novyi (strain NT)).